The chain runs to 111 residues: Cytochrome c oxidase subunit 6A1, mitochondrial (111 aa).

The transit peptide at Met-1–Met-26 directs the protein to the mitochondrion. Residues Ser-27–Ser-36 lie on the Mitochondrial matrix side of the membrane. Residues Ala-37 to Leu-61 traverse the membrane as a helical segment. Residues Lys-62–Glu-111 are Mitochondrial intermembrane-facing.

This sequence belongs to the cytochrome c oxidase subunit 6A family. Component of the cytochrome c oxidase (complex IV, CIV), a multisubunit enzyme composed of 14 subunits. The complex is composed of a catalytic core of 3 subunits MT-CO1, MT-CO2 and MT-CO3, encoded in the mitochondrial DNA, and 11 supernumerary subunits COX4I, COX5A, COX5B, COX6A, COX6B, COX6C, COX7A, COX7B, COX7C, COX8 and NDUFA4, which are encoded in the nuclear genome. The complex exists as a monomer or a dimer and forms supercomplexes (SCs) in the inner mitochondrial membrane with NADH-ubiquinone oxidoreductase (complex I, CI) and ubiquinol-cytochrome c oxidoreductase (cytochrome b-c1 complex, complex III, CIII), resulting in different assemblies (supercomplex SCI(1)III(2)IV(1) and megacomplex MCI(2)III(2)IV(2)).

Its subcellular location is the mitochondrion inner membrane. The protein operates within energy metabolism; oxidative phosphorylation. Functionally, component of the cytochrome c oxidase, the last enzyme in the mitochondrial electron transport chain which drives oxidative phosphorylation. The respiratory chain contains 3 multisubunit complexes succinate dehydrogenase (complex II, CII), ubiquinol-cytochrome c oxidoreductase (cytochrome b-c1 complex, complex III, CIII) and cytochrome c oxidase (complex IV, CIV), that cooperate to transfer electrons derived from NADH and succinate to molecular oxygen, creating an electrochemical gradient over the inner membrane that drives transmembrane transport and the ATP synthase. Cytochrome c oxidase is the component of the respiratory chain that catalyzes the reduction of oxygen to water. Electrons originating from reduced cytochrome c in the intermembrane space (IMS) are transferred via the dinuclear copper A center (CU(A)) of subunit 2 and heme A of subunit 1 to the active site in subunit 1, a binuclear center (BNC) formed by heme A3 and copper B (CU(B)). The BNC reduces molecular oxygen to 2 water molecules unsing 4 electrons from cytochrome c in the IMS and 4 protons from the mitochondrial matrix. This is Cytochrome c oxidase subunit 6A1, mitochondrial (Cox6a1) from Rattus norvegicus (Rat).